A 393-amino-acid chain; its full sequence is Methylthioribose-1-phosphate isomerase (393 aa).

Asp-265 serves as the catalytic Proton donor.

It belongs to the eIF-2B alpha/beta/delta subunits family. MtnA subfamily.

Its subcellular location is the cytoplasm. It is found in the nucleus. It catalyses the reaction 5-(methylsulfanyl)-alpha-D-ribose 1-phosphate = 5-(methylsulfanyl)-D-ribulose 1-phosphate. The protein operates within amino-acid biosynthesis; L-methionine biosynthesis via salvage pathway; L-methionine from S-methyl-5-thio-alpha-D-ribose 1-phosphate: step 1/6. Functionally, catalyzes the interconversion of methylthioribose-1-phosphate (MTR-1-P) into methylthioribulose-1-phosphate (MTRu-1-P). The sequence is that of Methylthioribose-1-phosphate isomerase from Cryptococcus neoformans var. neoformans serotype D (strain B-3501A) (Filobasidiella neoformans).